The sequence spans 276 residues: uncharacterized protein (276 aa).

Positions 20–137 (PVLIFIPGAN…PPINTFLPDS (118 aa)) constitute an AB hydrolase-1 domain.

The protein belongs to the AB hydrolase superfamily.

This is an uncharacterized protein from Staphylococcus aureus (strain MRSA252).